The sequence spans 481 residues: UDP-glycosyltransferase 72E2 (481 aa).

Histidine 18 acts as the Proton acceptor in catalysis. Histidine 18 provides a ligand contact to an anthocyanidin. The active-site Charge relay is aspartate 111. UDP-alpha-D-glucose is bound by residues alanine 346, glutamine 348, histidine 363, tryptophan 366, serine 368, and glutamate 371. An anthocyanidin is bound at residue alanine 386. Residues glutamate 387 and glutamine 388 each coordinate UDP-alpha-D-glucose.

It belongs to the UDP-glycosyltransferase family. Expressed in seedlings and roots.

The catalysed reaction is (E)-4-coumarate + UDP-alpha-D-glucose = 4-O-(beta-D-glucosyl)-trans-4-coumarate + UDP + H(+). It carries out the reaction (E)-coniferol + UDP-alpha-D-glucose = 4-O-(beta-D-glucosyl)-(E)-coniferol + UDP + H(+). It catalyses the reaction (E)-sinapyl alcohol + UDP-alpha-D-glucose = 4-O-(beta-D-glucosyl)-trans-4-sinapoyl alcohol + UDP + H(+). The enzyme catalyses (E)-sinapate + UDP-alpha-D-glucose = 4-O-(beta-D-glucosyl)-trans-sinapate + UDP + H(+). The catalysed reaction is (E)-coniferaldehyde + UDP-alpha-D-glucose = 4-O-(beta-D-glucosyl)-4-(E)-coniferyl aldehyde + UDP + H(+). It carries out the reaction (E)-sinapaldehyde + UDP-alpha-D-glucose = 4-O-(beta-D-glucosyl)-4-trans-sinapoyl aldehyde + UDP + H(+). Its function is as follows. Involved in the O-glucosylation of monolignols (alcohol monomers of lignin). Glucosylates coniferyl alcohol to form coniferyl alcohol 4-O-glucoside. Glucosylates sinapyl alcohol to form sinapyl alcohol 4-O-glucoside. Glucosylates coniferyl aldehyde to form coniferyl aldehyde 4-O-glucoside. Glucosylates sinapyl aldehyde to form sinapyl aldehyde 4-O-glucoside. Possesses low activity with sinapate and ferulate as substrates. This Arabidopsis thaliana (Mouse-ear cress) protein is UDP-glycosyltransferase 72E2.